We begin with the raw amino-acid sequence, 208 residues long: Small ribosomal subunit protein uS4 (208 aa).

An S4 RNA-binding domain is found at 98 to 159; it reads RRLDNVVYRL…KSRKIVSIND (62 aa).

Belongs to the universal ribosomal protein uS4 family. Part of the 30S ribosomal subunit. Contacts protein S5. The interaction surface between S4 and S5 is involved in control of translational fidelity.

Its function is as follows. One of the primary rRNA binding proteins, it binds directly to 16S rRNA where it nucleates assembly of the body of the 30S subunit. With S5 and S12 plays an important role in translational accuracy. In Pelobacter propionicus (strain DSM 2379 / NBRC 103807 / OttBd1), this protein is Small ribosomal subunit protein uS4.